The chain runs to 685 residues: Acetate--CoA ligase [ADP-forming] I (685 aa).

Residues 477-513 form the ATP-grasp domain; the sequence is LPVLEAYGIEVAPYGIARNVDEARDIAESIGYPVVLK. Residue 503-514 participates in ATP binding; that stretch reads AESIGYPVVLKV.

This sequence in the N-terminal section; belongs to the acetate CoA ligase alpha subunit family. The protein in the C-terminal section; belongs to the acetate CoA ligase beta subunit family. Homodimer.

It carries out the reaction acetate + ATP + CoA = acetyl-CoA + ADP + phosphate. With respect to regulation, activity requires divalent metal cations. Functionally, catalyzes the reversible formation of acetate and ATP from acetyl-CoA by using ADP and phosphate. Can use other substrates such as propionyl-CoA and butyryl-CoA, but not phenylacetyl-CoA. Seems to be involved primarily in the conversion of acetyl-CoA to acetate. Participates in the degradation of branched-chain amino acids via branched-chain-acyl-CoA esters. The chain is Acetate--CoA ligase [ADP-forming] I from Archaeoglobus fulgidus (strain ATCC 49558 / DSM 4304 / JCM 9628 / NBRC 100126 / VC-16).